We begin with the raw amino-acid sequence, 248 residues long: ATP synthase subunit a, chloroplastic (248 aa).

5 consecutive transmembrane segments (helical) span residues 38 to 58, 96 to 116, 135 to 155, 200 to 220, and 221 to 241; these read QVLI…TIAV, VPFI…GALL, INTT…AGLA, LVVA…VMFL, and GLFT…AYIG.

This sequence belongs to the ATPase A chain family. F-type ATPases have 2 components, CF(1) - the catalytic core - and CF(0) - the membrane proton channel. CF(1) has five subunits: alpha(3), beta(3), gamma(1), delta(1), epsilon(1). CF(0) has four main subunits: a, b, b' and c.

It is found in the plastid. It localises to the chloroplast thylakoid membrane. Key component of the proton channel; it plays a direct role in the translocation of protons across the membrane. This is ATP synthase subunit a, chloroplastic from Pinus koraiensis (Korean pine).